Reading from the N-terminus, the 136-residue chain is Large ribosomal subunit protein bL19 (136 aa).

It belongs to the bacterial ribosomal protein bL19 family.

This protein is located at the 30S-50S ribosomal subunit interface and may play a role in the structure and function of the aminoacyl-tRNA binding site. The protein is Large ribosomal subunit protein bL19 of Xylella fastidiosa (strain M23).